The chain runs to 471 residues: MSNAKTLYEKIYDAHVAVAAEGENPILYIDRHLVHEVTSPQAFDGLREKGRKIRQVGKTFATMDHNVSTQTKDINASGEMARIQMETLSKNCEEFGVTLYDLNHKYQGIVHVMGPELGITLPGMTIVCGDSHTATHGAFGSLAFGIGTSEVEHVLATQTLKQARAKTMKIDVKGKVAEGITAKDIVLAIIGKTTAAGGTGYVVEFCGEAITDLTMEGRMTVCNMAIELGAKAGLIAPDQTTFDYIAGRKFSPQGADLDAAIEYWSSLKTDDDAEFDAVVTLDASEIKPQVTWGTNPGQVIAVDAPIPAPESFADPVEKASAEKALAYMGLEAGKSLSDYNVDKVFVGSCTNSRIEDMRAAAAIAKGRKVASHVQALIVPGSEQVKAQAEKEGLDVIFKEAGFEWRLPGCSMCLAMNNDRLGPHERCASTSNRNFEGRQGRDGRTHLVSPAMAAAAAIAGHFVDIRTITEQA.

3 residues coordinate [4Fe-4S] cluster: cysteine 349, cysteine 409, and cysteine 412.

Belongs to the aconitase/IPM isomerase family. LeuC type 1 subfamily. Heterodimer of LeuC and LeuD. [4Fe-4S] cluster is required as a cofactor.

The enzyme catalyses (2R,3S)-3-isopropylmalate = (2S)-2-isopropylmalate. Its pathway is amino-acid biosynthesis; L-leucine biosynthesis; L-leucine from 3-methyl-2-oxobutanoate: step 2/4. Catalyzes the isomerization between 2-isopropylmalate and 3-isopropylmalate, via the formation of 2-isopropylmaleate. This chain is 3-isopropylmalate dehydratase large subunit, found in Aliivibrio fischeri (strain MJ11) (Vibrio fischeri).